Consider the following 196-residue polypeptide: Nucleoside triphosphate pyrophosphatase (196 aa).

The active-site Proton acceptor is the Asp70.

The protein belongs to the Maf family. The cofactor is a divalent metal cation.

It is found in the cytoplasm. It carries out the reaction a ribonucleoside 5'-triphosphate + H2O = a ribonucleoside 5'-phosphate + diphosphate + H(+). It catalyses the reaction a 2'-deoxyribonucleoside 5'-triphosphate + H2O = a 2'-deoxyribonucleoside 5'-phosphate + diphosphate + H(+). Nucleoside triphosphate pyrophosphatase. May have a dual role in cell division arrest and in preventing the incorporation of modified nucleotides into cellular nucleic acids. This chain is Nucleoside triphosphate pyrophosphatase, found in Gloeothece citriformis (strain PCC 7424) (Cyanothece sp. (strain PCC 7424)).